The chain runs to 121 residues: Small ribosomal subunit protein uS13 (121 aa).

Residues 94-121 (GLPVRGQRTRTNSRTRKGPKKGAAALKK) are disordered.

It belongs to the universal ribosomal protein uS13 family. As to quaternary structure, part of the 30S ribosomal subunit. Forms a loose heterodimer with protein S19. Forms two bridges to the 50S subunit in the 70S ribosome.

In terms of biological role, located at the top of the head of the 30S subunit, it contacts several helices of the 16S rRNA. In the 70S ribosome it contacts the 23S rRNA (bridge B1a) and protein L5 of the 50S subunit (bridge B1b), connecting the 2 subunits; these bridges are implicated in subunit movement. Contacts the tRNAs in the A and P-sites. This chain is Small ribosomal subunit protein uS13, found in Leptothrix cholodnii (strain ATCC 51168 / LMG 8142 / SP-6) (Leptothrix discophora (strain SP-6)).